A 215-amino-acid polypeptide reads, in one-letter code: Cytochrome b6 (215 aa).

The helical transmembrane segment at 32-52 threads the bilayer; that stretch reads IFYCLGGITLTCFLVQVATGF. Cysteine 35 contributes to the heme c binding site. 2 residues coordinate heme b: histidine 86 and histidine 100. 3 helical membrane-spanning segments follow: residues 90–110, 116–136, and 186–206; these read ASMMVLMMILHVFRVYLTGGF, LTWVTGVVLGVLTASFGVTGY, and LHTFVLPLLTAVFMLMHFLMI. Histidine 187 and histidine 202 together coordinate heme b.

The protein belongs to the cytochrome b family. PetB subfamily. In terms of assembly, the 4 large subunits of the cytochrome b6-f complex are cytochrome b6, subunit IV (17 kDa polypeptide, PetD), cytochrome f and the Rieske protein, while the 4 small subunits are PetG, PetL, PetM and PetN. The complex functions as a dimer. The cofactor is heme b. Heme c is required as a cofactor.

The protein resides in the plastid. Its subcellular location is the chloroplast thylakoid membrane. In terms of biological role, component of the cytochrome b6-f complex, which mediates electron transfer between photosystem II (PSII) and photosystem I (PSI), cyclic electron flow around PSI, and state transitions. The sequence is that of Cytochrome b6 from Arabidopsis thaliana (Mouse-ear cress).